The sequence spans 398 residues: G2/mitotic-specific cyclin-B2 (398 aa).

The residue at position 8 (Thr8) is a Phosphothreonine. Residues Ser11, Ser77, and Ser92 each carry the phosphoserine modification. At Thr94 the chain carries Phosphothreonine. Phosphoserine occurs at positions 99, 392, and 398.

The protein belongs to the cyclin family. Cyclin AB subfamily. Interacts with the CDK1 protein kinase to form a serine/threonine kinase holoenzyme complex also known as maturation promoting factor (MPF). The cyclin subunit imparts substrate specificity to the complex.

In terms of biological role, essential for the control of the cell cycle at the G2/M (mitosis) transition. This is G2/mitotic-specific cyclin-B2 (CCNB2) from Homo sapiens (Human).